Reading from the N-terminus, the 291-residue chain is Omega-amidase NIT3 (291 aa).

The CN hydrolase domain occupies 11-264 (IKVALVQLSG…EEIIYAELDP (254 aa)). A Phosphothreonine modification is found at T34. Catalysis depends on E53, which acts as the Proton acceptor. K128 (proton donor) is an active-site residue. C169 (nucleophile) is an active-site residue.

It belongs to the carbon-nitrogen hydrolase superfamily. NIT1/NIT2 family. As to quaternary structure, homodimer.

The enzyme catalyses a monoamide of a dicarboxylate + H2O = a dicarboxylate + NH4(+). Functionally, possesses omega-amidase activity. The role of omega-amidase is to remove potentially toxic intermediates by converting 2-oxoglutaramate and 2-oxosuccinamate to biologically useful 2-oxoglutarate and oxaloacetate, respectively. The chain is Omega-amidase NIT3 (NIT3) from Saccharomyces cerevisiae (strain ATCC 204508 / S288c) (Baker's yeast).